The primary structure comprises 364 residues: Probable dual-specificity RNA methyltransferase RlmN (364 aa).

The active-site Proton acceptor is the Glu106. Residues 112-350 (YPQRNTVCIS…SCTVRDTRGR (239 aa)) form the Radical SAM core domain. The cysteines at positions 119 and 356 are disulfide-linked. [4Fe-4S] cluster is bound by residues Cys126, Cys130, and Cys133. Residues 177–178 (GE), Ser211, 234–236 (SLH), and Asn313 each bind S-adenosyl-L-methionine. Catalysis depends on Cys356, which acts as the S-methylcysteine intermediate.

The protein belongs to the radical SAM superfamily. RlmN family. [4Fe-4S] cluster is required as a cofactor.

Its subcellular location is the cytoplasm. It carries out the reaction adenosine(2503) in 23S rRNA + 2 reduced [2Fe-2S]-[ferredoxin] + 2 S-adenosyl-L-methionine = 2-methyladenosine(2503) in 23S rRNA + 5'-deoxyadenosine + L-methionine + 2 oxidized [2Fe-2S]-[ferredoxin] + S-adenosyl-L-homocysteine. The catalysed reaction is adenosine(37) in tRNA + 2 reduced [2Fe-2S]-[ferredoxin] + 2 S-adenosyl-L-methionine = 2-methyladenosine(37) in tRNA + 5'-deoxyadenosine + L-methionine + 2 oxidized [2Fe-2S]-[ferredoxin] + S-adenosyl-L-homocysteine. Its function is as follows. Specifically methylates position 2 of adenine 2503 in 23S rRNA and position 2 of adenine 37 in tRNAs. This chain is Probable dual-specificity RNA methyltransferase RlmN, found in Mycobacterium ulcerans (strain Agy99).